The following is a 653-amino-acid chain: Sulfate transporter 1.2 (653 aa).

The segment at 1–30 (MSSRAHPVDGSPATDGGHVPMKPSPTRHKV) is disordered. Residues 1 to 91 (MSSRAHPVDG…GRNYTFKKFR (91 aa)) lie on the Cytoplasmic side of the membrane. Residues 92 to 112 (GDLISGLTIASLCIPQDIGYA) traverse the membrane as a helical segment. Topologically, residues 113-116 (KLAN) are extracellular. The helical transmembrane segment at 117–137 (LDPKYGLYSSFVPPLVYACMG) threads the bilayer. The Cytoplasmic portion of the chain corresponds to 138–141 (SSRD). Residues 142-162 (IAIGPVAVVSLLLGTLLRAEI) form a helical membrane-spanning segment. Residues 163–173 (DPNTSPDEYLR) lie on the Extracellular side of the membrane. 2 consecutive transmembrane segments (helical) span residues 174–194 (LAFT…FFRL) and 195–215 (GFLI…GAAI). Residues 216–253 (TIALQQLKGFLGIKKFTKKTDIISVLESVFKAAHHGWN) are Extracellular-facing. The chain crosses the membrane as a helical span at residues 254-274 (WQTILIGASFLTFLLTSKIIG). Over 275-280 (KKSKKL) the chain is Cytoplasmic. Residues 281 to 301 (FWVPAIAPLISVIVSTFFVYI) form a helical membrane-spanning segment. At 302–339 (TRADKQGVQIVKHLDQGINPSSFHLIYFTGDNLAKGIR) the chain is on the extracellular side. Residues 340–360 (IGVVAGMVALTEAVAIGRTFA) traverse the membrane as a helical segment. Residues 361 to 372 (AMKDYQIDGNKE) lie on the Cytoplasmic side of the membrane. Residues 373-393 (MVALGMMNVVGSMSSCYVATG) form a helical membrane-spanning segment. Residues 394–409 (SFSRSAVNFMAGCQTA) lie on the Extracellular side of the membrane. The helical transmembrane segment at 410 to 430 (VSNIIMSIVVLLTLLFLTPLF) threads the bilayer. Residues 431–438 (KYTPNAIL) are Cytoplasmic-facing. A helical transmembrane segment spans residues 439–459 (AAIIINAVIPLIDIQAAILIF). Topologically, residues 460-466 (KVDKLDF) are extracellular. The chain crosses the membrane as a helical span at residues 467–487 (IACIGAFFGVIFVSVEIGLLI). Topologically, residues 488 to 653 (AVSISFAKIL…ACCPKLSNEV (166 aa)) are cytoplasmic. An STAS domain is found at 522 to 645 (QYPEATMVPG…LTVADAVEAC (124 aa)).

Belongs to the SLC26A/SulP transporter (TC 2.A.53.1) family. Homodimer. Interacts with OASA1 through its STAS domain. Expressed in lateral root cap, root hairs, epidermal and cortical cells of roots.

The protein localises to the cell membrane. With respect to regulation, interaction with OASA1 negatively impacts the transporter activity. High-affinity H(+)/sulfate cotransporter that mediates the uptake of the environmental sulfate by plant roots. Plays a central role in the regulation of sulfate assimilation. Unable to transport molybdate. The protein is Sulfate transporter 1.2 (SULTR1;2) of Arabidopsis thaliana (Mouse-ear cress).